An 894-amino-acid polypeptide reads, in one-letter code: DNA mismatch repair protein MutS (894 aa).

Residue 632–639 (GPNMGGKS) participates in ATP binding.

Belongs to the DNA mismatch repair MutS family.

Functionally, this protein is involved in the repair of mismatches in DNA. It is possible that it carries out the mismatch recognition step. This protein has a weak ATPase activity. This chain is DNA mismatch repair protein MutS, found in Paraburkholderia phytofirmans (strain DSM 17436 / LMG 22146 / PsJN) (Burkholderia phytofirmans).